The chain runs to 241 residues: Uridylate kinase (241 aa).

15 to 18 provides a ligand contact to ATP; that stretch reads KLSG. The interval 23-28 is involved in allosteric activation by GTP; sequence GTEGFG. G57 contacts UMP. ATP is bound by residues G58 and R62. Residues D77 and 138–145 contribute to the UMP site; that span reads TGNPFFTT. Positions 165, 171, and 174 each coordinate ATP.

Belongs to the UMP kinase family. Homohexamer.

It is found in the cytoplasm. The catalysed reaction is UMP + ATP = UDP + ADP. It functions in the pathway pyrimidine metabolism; CTP biosynthesis via de novo pathway; UDP from UMP (UMPK route): step 1/1. Its activity is regulated as follows. Allosterically activated by GTP. Inhibited by UTP. In terms of biological role, catalyzes the reversible phosphorylation of UMP to UDP. This chain is Uridylate kinase, found in Pectobacterium atrosepticum (strain SCRI 1043 / ATCC BAA-672) (Erwinia carotovora subsp. atroseptica).